Consider the following 179-residue polypeptide: Large ribosomal subunit protein uL6 (179 aa).

The protein belongs to the universal ribosomal protein uL6 family. As to quaternary structure, part of the 50S ribosomal subunit.

Its function is as follows. This protein binds to the 23S rRNA, and is important in its secondary structure. It is located near the subunit interface in the base of the L7/L12 stalk, and near the tRNA binding site of the peptidyltransferase center. This is Large ribosomal subunit protein uL6 from Koribacter versatilis (strain Ellin345).